We begin with the raw amino-acid sequence, 92 residues long: Probable Fe(2+)-trafficking protein (92 aa).

It belongs to the Fe(2+)-trafficking protein family.

Could be a mediator in iron transactions between iron acquisition and iron-requiring processes, such as synthesis and/or repair of Fe-S clusters in biosynthetic enzymes. This Shewanella halifaxensis (strain HAW-EB4) protein is Probable Fe(2+)-trafficking protein.